The chain runs to 245 residues: 2,3,4,5-tetrahydropyridine-2,6-dicarboxylate N-acetyltransferase (245 aa).

Belongs to the transferase hexapeptide repeat family. DapH subfamily.

The catalysed reaction is (S)-2,3,4,5-tetrahydrodipicolinate + acetyl-CoA + H2O = L-2-acetamido-6-oxoheptanedioate + CoA. The protein operates within amino-acid biosynthesis; L-lysine biosynthesis via DAP pathway; LL-2,6-diaminopimelate from (S)-tetrahydrodipicolinate (acetylase route): step 1/3. Functionally, catalyzes the transfer of an acetyl group from acetyl-CoA to tetrahydrodipicolinate. In Methanopyrus kandleri (strain AV19 / DSM 6324 / JCM 9639 / NBRC 100938), this protein is 2,3,4,5-tetrahydropyridine-2,6-dicarboxylate N-acetyltransferase.